A 572-amino-acid polypeptide reads, in one-letter code: MLDMRSMVTVHPALIAKPKGKTVSGDGADPKKRGRPKKNATEPAVRNPVTRAGVTRYMNPLVESLVRDNPFRGDNLVKESLLGQTLAEQTLVRANSRDNLLKESLVEQSFVDQTLQDQSLVDQSILRESLLRDNPRDTLRKESLRKYNSRANPLAESLLEESTTPKPRRGAHRKPLVLTKEMEEKLEALDRDMRTAEETKVSIAGSAGIPVTALPGMEALGVMQMVSSLGFLDAGDKPNVIKTMVVKYLDVFLSMGCSAPKPCLVNVPRGYRRFKQSSSVSPAYAAKLSSEDTEAWSGAAGVAVEAKMRHTAAVLESRNLSLEPYGSNPIKLERSALAAYMELMSMAEEAEGEDLEGIISDCRVLRTSTEWCRDLSQTVSSWWPPLREAISRRGTALSDYVSDREVDVIRGRSRVPALSCVLLYGKRVDDNDAPLTAPQTVLKPFDVTDYSRRLGGVWLHHARFPEYAPKRLFDPRPGAEPVLIRTCAGYLMTEERGPLRCWRKDAHMYQISLEIYNRLTTELNAVPPQTRCGRYNAKWLSTNGPTGVQKIVLAAARALTEPRLSWNDVFEV.

Residues 13 to 45 (ALIAKPKGKTVSGDGADPKKRGRPKKNATEPAV) are disordered. Positions 177 to 204 (VLTKEMEEKLEALDRDMRTAEETKVSIA) form a coiled coil.

This is an uncharacterized protein from Dryophytes versicolor (chameleon treefrog).